The chain runs to 504 residues: MEEFQGYLELEKSRQRDFLYPLIFREYIYAFSHDHFLNGSILLENSGYDKKSSLLMVKHLITRMYHQNHFFFFTNYYNKNPFWGYNNNLYSQMLSEGFAVIVEIPLSLRLVSSLEEEEIAKSYNLRSSHSIFPFLEDKFPHLNYVSDVLIPYPLHLEILVQILRSWVKDASSFHLLRFFFHEYCNLNSLSTSKKLISFFSKRNRRLVLLLYNSYVCEYESIFLFLRNQSSHIRLTSYKGLFERIYFYGKIEHLVKVFANYFSAILRVFKDPLIHYVRYQAKSILVSKDTPLLINKWKYYLVNLWQCHFYVWSQPERIYINQLSKRSLDFLGYISSVRLNPSVVWTQMLENSFLIDNATQKLDTLVPIITLLASLAKAKFCNVLGHPISKPTWIDSSDFDIIDRFLRISRNLSHYYRGSSKKKNLYRIQYILRLSCVKTLARKHKSTVRALFKRLNSELLEEFFTEQEQVLSLIFPRTSFTLRRVYRGKIWYLDIICMNDLANHE.

The protein belongs to the intron maturase 2 family. MatK subfamily.

It is found in the plastid. The protein resides in the chloroplast. Functionally, usually encoded in the trnK tRNA gene intron. Probably assists in splicing its own and other chloroplast group II introns. This Cucumis sativus (Cucumber) protein is Maturase K.